The following is a 149-amino-acid chain: AAETVVSGAELSLTANSGGEKTPPHAPGLLRRSKRCSCSSLMDKECVYFCHLDIIWVNTPGHIAPYGLGGPFRSKRSLKELFPTKATEHRNRCQCANQKDKKCWNFCQAGKELSSQDTMQKGWDNHKKGKDCSKLGKKCISQQLGNGKK.

Residues 1–33 constitute a propeptide that is removed on maturation; it reads AAETVVSGAELSLTANSGGEKTPPHAPGLLRRS. Residues 6–26 are disordered; it reads VSGAELSLTANSGGEKTPPHA. Cystine bridges form between C36/C50 and C38/C46. The propeptide occupies 57 to 149; sequence VNTPGHIAPY…ISQQLGNGKK (93 aa). Residues 93 to 107 form an endothelin-like region; sequence CQCANQKDKKCWNFC.

It belongs to the endothelin/sarafotoxin family.

It is found in the secreted. Its function is as follows. Endothelins are endothelium-derived vasoconstrictor peptides. Probable ligand for G-protein coupled receptors EDNRA and EDNRB which activates PTK2B, BCAR1, BCAR3 and, GTPases RAP1 and RHOA cascade in glomerular mesangial cells. Also binds the DEAR/FBXW7-AS1 receptor. Promotes mesenteric arterial wall remodeling via activation of ROCK signaling and subsequent colocalization of NFATC3 with F-actin filaments. NFATC3 then translocates to the nucleus where it subsequently promotes the transcription of the smooth muscle hypertrophy and differentiation marker ACTA2. This is Endothelin-1 (EDN1) from Cavia porcellus (Guinea pig).